Reading from the N-terminus, the 75-residue chain is MSSGGLLLLLGLLTLWAELTPVSSLDRPKKPGLCPPRPQKPPCVRECKNDWRCPGEQKCCRYGCIYECRDPIFVK.

A signal peptide spans 1–24 (MSSGGLLLLLGLLTLWAELTPVSS). A WAP domain is found at 27–72 (RPKKPGLCPPRPQKPPCVRECKNDWRCPGEQKCCRYGCIYECRDPI). Cystine bridges form between cysteine 34–cysteine 60, cysteine 43–cysteine 64, cysteine 47–cysteine 59, and cysteine 53–cysteine 68.

It belongs to the venom waprin family. Expressed by the venom gland.

It localises to the secreted. In terms of biological role, damages membranes of susceptible bacteria. Has no hemolytic activity. Not toxic to mice. Does not inhibit the proteinases elastase and cathepsin G. This Pseudechis porphyriacus (Red-bellied black snake) protein is Porwaprin-d.